Reading from the N-terminus, the 892-residue chain is Chromodomain-helicase-DNA-binding protein 3 (892 aa).

Positions methionine 1 to aspartate 20 are enriched in basic and acidic residues. The segment at methionine 1 to lysine 29 is disordered. The PHD-type zinc finger occupies glutamate 35 to leucine 82. 2 consecutive Chromo domains span residues glycine 84–glutamate 156 and leucine 179–arginine 240. In terms of domain architecture, Helicase ATP-binding spans arginine 279–glycine 458. Position 292–299 (aspartate 292–threonine 299) interacts with ATP. Residues aspartate 409–histidine 412 carry the DEAH box motif. A Helicase C-terminal domain is found at leucine 590–methionine 739. The disordered stretch occupies residues serine 839 to methionine 892. A compositionally biased stretch (polar residues) spans tyrosine 874–methionine 892.

It belongs to the SNF2/RAD54 helicase family. In terms of assembly, monomer.

It is found in the nucleus. The protein localises to the chromosome. It carries out the reaction ATP + H2O = ADP + phosphate + H(+). With respect to regulation, ATPase activity is stimulated by binding to DNA or nucleosomes, but is strongly activated by nucleosomes. Functionally, ATP-dependent chromatin-remodeling factor which acts in nucleosome-remodeling by catalyzing ATP-dependent nucleosome mobilization. Likely to be involved in the regulation of transcription. This chain is Chromodomain-helicase-DNA-binding protein 3, found in Drosophila melanogaster (Fruit fly).